Here is a 638-residue protein sequence, read N- to C-terminus: MMGIQILPPQLANQIAAGEVVERPASVVKELVENSLDAGASRVDIEIDKGGSKLIKIRDNGSGIPKDELALALSRHATSKLHTLDDLEAILSFGFRGEALASISSVSRLTLTSRTADQTEAWQAHAEGADMAVKVMPAAHPVGSTIEVVDLFFNTPARRRFLKSDKTEFTHIDEWLKRIALVRGDIHFTLTHNGKMVRNYRPAMNEAQYLQRLTQVCGRPFAEQALKIECQHDDLRLSGYLQSPWSPVISDTHYFYVNGRLIRDRLVNHAVRQAFAQKAELEQPGYVLMLDIDPHQVDVNVHPAKHEVRFHQSRYVHDYILQALQSALEEAGELNFVHSSSLDEVEDVFVDAPTSATEISAPFVLGADSAQVNVPADTLESAQPLVASAVQVKSAGAGREGTSFGTQTNAFGSMATPRDNSRGSYSAGESRQRTELPSKAAIASYGALLQTPSYSVKDQDYQPSLPMPAILDGQYWVMATADKLSLLPIKSVALATRCQEIEAKLATGLIGQPLLMPVSVAADADWQAVLDEHDTLIRQLGLELTIRYQQLIIKKVPPYIRESQLAKVIPEWLQSLRFETPAPSALAFWLAKHSLTGFVSAPEIWAAFSQLAEEKKQLIANKAILLPWQSWLEEQASE.

Residues 398–435 (GREGTSFGTQTNAFGSMATPRDNSRGSYSAGESRQRTE) form a disordered region.

Belongs to the DNA mismatch repair MutL/HexB family.

Its function is as follows. This protein is involved in the repair of mismatches in DNA. It is required for dam-dependent methyl-directed DNA mismatch repair. May act as a 'molecular matchmaker', a protein that promotes the formation of a stable complex between two or more DNA-binding proteins in an ATP-dependent manner without itself being part of a final effector complex. In Shewanella baltica (strain OS155 / ATCC BAA-1091), this protein is DNA mismatch repair protein MutL.